Here is a 457-residue protein sequence, read N- to C-terminus: Putative purine-cytosine permease YxlA (457 aa).

The next 12 membrane-spanning stretches (helical) occupy residues 24-44 (FPVW…TIPV), 50-70 (LFWS…FMAS), 90-110 (FGVI…LGFF), 127-147 (IPGS…TIFG), 164-184 (AVFF…GSWI), 192-212 (IFLV…PYVA), 228-248 (FWYS…LGAL), 264-284 (IVQL…FGQM), 316-336 (IIMI…GQSN), 341-361 (FLNF…INLV), 392-412 (IAFV…FYIG), and 420-440 (GGDI…YVLM).

Belongs to the purine-cytosine permease (2.A.39) family.

It is found in the cell membrane. This Bacillus subtilis (strain 168) protein is Putative purine-cytosine permease YxlA (yxlA).